The sequence spans 78 residues: U-scoloptoxin(15)-Ssm2a (78 aa).

An N-terminal signal peptide occupies residues M1–S23. Residues P34–K37 form an important for inhibition of KCNQ4 region. 2 disulfide bridges follow: C44–C70 and C48–C72.

This sequence belongs to the SLPTX(15) family. Expressed by the venom gland.

It is found in the secreted. The polypeptide is U-scoloptoxin(15)-Ssm2a (Scolopendra mutilans (Chinese red-headed centipede)).